Here is a 908-residue protein sequence, read N- to C-terminus: Chloride channel protein 2 (908 aa).

Over 1–95 the chain is Cytoplasmic; that stretch reads MAAATAAAAA…RCHKFLVSRV (95 aa). The segment at 24–42 is essential for channel gating by both voltage and cell volume; sequence QYEQTLMYGRYTQELGAFA. Thr28 bears the Phosphothreonine mark. The interval 44–57 is modulates channel gating by both voltage and cell volume; sequence EEAARIRLGGPEPW. 2 consecutive transmembrane segments (helical) span residues 96–129 and 138–163; these read GEDW…AQQW and ILLQ…TQIL. The Selectivity filter part_1 motif lies at 169-173; that stretch reads GSGIP. Ser170 lines the chloride pocket. The segment at residues 172–179 is an intramembrane region (helical); the sequence is IPEMKTIL. A run of 2 helical transmembrane segments spans residues 188–206 and 213–231; these read LTLK…ALGS and EGPF…SKFL. The Selectivity filter part_2 motif lies at 211 to 215; sequence GKEGP. 2 intramembrane regions (helical) span residues 247–259 and 263–271; these read MLAA…VGCC and PIGGVLFSI. Helical transmembrane passes span 283-303, 329-357, 366-385, 437-457, and 465-488; these read YWRG…LAVW, LPAF…VQVM, FLMR…ISTL, ANVF…SALA, and GAFM…MAAW. The Selectivity filter part_3 signature appears at 465-469; sequence GAFMP. Position 467 (Phe467) interacts with chloride. Residues 505–519 constitute an intramembrane region (helical); sequence GGYAVVGAAALAGAV. Positions 520-521 form an intramembrane region, note=Loop between two helices; sequence TH. An intramembrane region (helical) is located at residues 522–533; sequence TVSTAVIVFELT. Residues 534 to 538 constitute an intramembrane region (note=Loop between two helices); sequence GQIAH. The helical transmembrane segment at 539-556 threads the bilayer; it reads ILPVMIAVILANAVAQSL. At 557 to 908 the chain is on the cytoplasmic side; it reads QPSLYDSIIR…TPSDSDDKCQ (352 aa). Tyr561 provides a ligand contact to chloride. In terms of domain architecture, CBS 1 spans 592–650; the sequence is MVRDVPHVALSCTFRDLRLALHRTKGRMLALVESPESMILLGSIERSQVVALLGAQLSP. The span at 653–662 shows a compositional bias: basic residues; that stretch reads RRQHMQKLRK. Residues 653-722 form a disordered region; it reads RRQHMQKLRK…NSTSLQEGTT (70 aa). Residues 666 to 680 show a composition bias toward low complexity; the sequence is SPPSDQESPPSSETS. Positions 681-690 are enriched in polar residues; that stretch reads IRFQVNTEDS. Basic residues predominate over residues 698–707; that stretch reads QTHKPLKPAL. Residues 711-722 show a composition bias toward polar residues; the sequence is PSNSTSLQEGTT. A Phosphoserine modification is found at Ser768. The CBS 2 domain occupies 800–860; that stretch reads IDPAPFQLVE…GSVTAQGVKV (61 aa). The Basolateral membrane sorting motif lies at 822-823; sequence LL. Positions 866-908 are disordered; that stretch reads SFRDSATSSSDTETTEVHALWGPRSRHGLPREGTPSDSDDKCQ.

The protein belongs to the chloride channel (TC 2.A.49) family. ClC-2/CLCN2 subfamily. In terms of assembly, homodimer. Interacts with auxiliary subunit HEPACAM. In terms of processing, phosphorylated. Activated by dephosphorylation. In terms of tissue distribution, expressed in the adrenal gland and brain. Expressed in intestinal epithelium (at protein level). Expressed in salivary gland (at protein level).

The protein localises to the cell membrane. The protein resides in the myelin membrane. It is found in the basolateral cell membrane. It localises to the cell projection. Its subcellular location is the dendritic spine membrane. The protein localises to the axon. It catalyses the reaction chloride(in) = chloride(out). The catalysed reaction is thiocyanate(in) = thiocyanate(out). It carries out the reaction bromide(in) = bromide(out). The enzyme catalyses nitrate(in) = nitrate(out). It catalyses the reaction iodide(out) = iodide(in). With respect to regulation, common gate kinetics are down-regulated by intracellular ATP. Inhibited by AK-42, a derivative of meclofenamate. Inhibited by Cd(2+). Inhibited by Zn(2+) and PKC activation. Inhibited at acidic pH. CCLN2:HEPACAM channel conductance is up-regulated upon hypo-osmolarity. Voltage-gated and osmosensitive chloride channel. Forms a homodimeric channel where each subunit has its own ion conduction pathway. Conducts double-barreled currents controlled by two types of gates, two fast glutamate gates that control each subunit independently and a slow common gate that opens and shuts off both subunits simultaneously. Displays inward rectification currents activated upon membrane hyperpolarization and extracellular hypotonicity. Contributes to chloride conductance involved in neuron excitability. In hippocampal neurons, generates a significant part of resting membrane conductance and provides an additional chloride efflux pathway to prevent chloride accumulation in dendrites upon GABA receptor activation. In glia, associates with the auxiliary subunit HEPACAM/GlialCAM at astrocytic processes and myelinated fiber tracts where it may regulate transcellular chloride flux buffering extracellular chloride and potassium concentrations. Regulates aldosterone production in adrenal glands. The opening of CLCN2 channels at hyperpolarized membrane potentials in the glomerulosa causes cell membrane depolarization, activation of voltage-gated calcium channels and increased expression of aldosterone synthase, the rate-limiting enzyme for aldosterone biosynthesis. Contributes to chloride conductance in retinal pigment epithelium involved in phagocytosis of shed photoreceptor outer segments and photoreceptor renewal. Conducts chloride currents at the basolateral membrane of epithelial cells with a role in chloride reabsorption rather than secretion. Permeable to small monovalent anions with chloride &gt; thiocyanate &gt; bromide &gt; nitrate &gt; iodide ion selectivity. In Mus musculus (Mouse), this protein is Chloride channel protein 2 (Clcn2).